The sequence spans 160 residues: Putative 4-hydroxy-4-methyl-2-oxoglutarate aldolase (160 aa).

Substrate contacts are provided by residues 78-81 (GDVI) and arginine 100. Aspartate 101 provides a ligand contact to a divalent metal cation.

It belongs to the class II aldolase/RraA-like family. As to quaternary structure, homotrimer. The cofactor is a divalent metal cation.

It carries out the reaction 4-hydroxy-4-methyl-2-oxoglutarate = 2 pyruvate. The catalysed reaction is oxaloacetate + H(+) = pyruvate + CO2. In terms of biological role, catalyzes the aldol cleavage of 4-hydroxy-4-methyl-2-oxoglutarate (HMG) into 2 molecules of pyruvate. Also contains a secondary oxaloacetate (OAA) decarboxylase activity due to the common pyruvate enolate transition state formed following C-C bond cleavage in the retro-aldol and decarboxylation reactions. The chain is Putative 4-hydroxy-4-methyl-2-oxoglutarate aldolase from Mycolicibacterium vanbaalenii (strain DSM 7251 / JCM 13017 / BCRC 16820 / KCTC 9966 / NRRL B-24157 / PYR-1) (Mycobacterium vanbaalenii).